Here is an 88-residue protein sequence, read N- to C-terminus: MEKMVLRKVVLLAILLSLSCLWVAKALEGESKVSGQVRDETPHTWYCKYDDNCRENCPGCTITKCNYGVCICSNCYHQQSDLGVESHM.

An N-terminal signal peptide occupies residues 1–26 (MEKMVLRKVVLLAILLSLSCLWVAKA). 3 cysteine pairs are disulfide-bonded: Cys-47–Cys-65, Cys-53–Cys-70, and Cys-57–Cys-72.

It belongs to the DEFL family.

It localises to the secreted. In Arabidopsis thaliana (Mouse-ear cress), this protein is Putative defensin-like protein 264.